A 458-amino-acid polypeptide reads, in one-letter code: Cysteine--tRNA ligase (458 aa).

Residue Cys-27 participates in Zn(2+) binding. Positions 29-39 match the 'HIGH' region motif; it reads MTVYDYMHIGH. Zn(2+)-binding residues include Cys-208, His-233, and Glu-237. A 'KMSKS' region motif is present at residues 265–269; sequence KMSKS. ATP is bound at residue Lys-268.

This sequence belongs to the class-I aminoacyl-tRNA synthetase family. As to quaternary structure, monomer. It depends on Zn(2+) as a cofactor.

The protein resides in the cytoplasm. The enzyme catalyses tRNA(Cys) + L-cysteine + ATP = L-cysteinyl-tRNA(Cys) + AMP + diphosphate. This chain is Cysteine--tRNA ligase, found in Coxiella burnetii (strain Dugway 5J108-111).